The primary structure comprises 338 residues: Large ribosomal subunit protein uL10 (338 aa).

Over residues 298–308 the composition is skewed to low complexity; it reads AAQQTQTQQST. Residues 298–338 are disordered; it reads AAQQTQTQQSTAEEKKEEKKEEEKKGPSEEEIGSGLASLFG. Residues 309 to 325 are compositionally biased toward basic and acidic residues; sequence AEEKKEEKKEEEKKGPS.

Belongs to the universal ribosomal protein uL10 family. Part of the 50S ribosomal subunit. Forms part of the ribosomal stalk which helps the ribosome interact with GTP-bound translation factors. Forms a heptameric L10(L12)2(L12)2(L12)2 complex, where L10 forms an elongated spine to which the L12 dimers bind in a sequential fashion.

Functionally, forms part of the ribosomal stalk, playing a central role in the interaction of the ribosome with GTP-bound translation factors. This Saccharolobus islandicus (strain M.16.27) (Sulfolobus islandicus) protein is Large ribosomal subunit protein uL10.